The following is a 207-amino-acid chain: Large ribosomal subunit protein uL4 (207 aa).

Residues Lys44–Gly76 form a disordered region. Residues Gly60–Gly76 are compositionally biased toward basic residues.

Belongs to the universal ribosomal protein uL4 family. As to quaternary structure, part of the 50S ribosomal subunit.

Its function is as follows. One of the primary rRNA binding proteins, this protein initially binds near the 5'-end of the 23S rRNA. It is important during the early stages of 50S assembly. It makes multiple contacts with different domains of the 23S rRNA in the assembled 50S subunit and ribosome. In terms of biological role, forms part of the polypeptide exit tunnel. The polypeptide is Large ribosomal subunit protein uL4 (Natranaerobius thermophilus (strain ATCC BAA-1301 / DSM 18059 / JW/NM-WN-LF)).